The following is a 337-amino-acid chain: DNA-directed RNA polymerase subunit alpha (337 aa).

The interval 1-226 (MLIAQRPTLT…ELFGLARELN (226 aa)) is alpha N-terminal domain (alpha-NTD). Residues 243 to 337 (LAADLALEIE…DTSFAEDEQL (95 aa)) form an alpha C-terminal domain (alpha-CTD) region. A disordered region spans residues 315–337 (FDPSAVVNDFEDDDTSFAEDEQL). The segment covering 323–337 (DFEDDDTSFAEDEQL) has biased composition (acidic residues).

Belongs to the RNA polymerase alpha chain family. Homodimer. The RNAP catalytic core consists of 2 alpha, 1 beta, 1 beta' and 1 omega subunit. When a sigma factor is associated with the core the holoenzyme is formed, which can initiate transcription.

The enzyme catalyses RNA(n) + a ribonucleoside 5'-triphosphate = RNA(n+1) + diphosphate. Functionally, DNA-dependent RNA polymerase catalyzes the transcription of DNA into RNA using the four ribonucleoside triphosphates as substrates. The chain is DNA-directed RNA polymerase subunit alpha from Kineococcus radiotolerans (strain ATCC BAA-149 / DSM 14245 / SRS30216).